We begin with the raw amino-acid sequence, 277 residues long: Shikimate dehydrogenase (NADP(+)) (277 aa).

Shikimate is bound by residues 15–17 (SLS) and Thr62. Lys66 (proton acceptor) is an active-site residue. Asn87 and Asp102 together coordinate shikimate. Residues 127–131 (GAGGA), 151–156 (NRTVDK), and Ile219 each bind NADP(+). Tyr221 serves as a coordination point for shikimate. Residue Gly242 participates in NADP(+) binding.

Belongs to the shikimate dehydrogenase family. Homodimer.

The catalysed reaction is shikimate + NADP(+) = 3-dehydroshikimate + NADPH + H(+). Its pathway is metabolic intermediate biosynthesis; chorismate biosynthesis; chorismate from D-erythrose 4-phosphate and phosphoenolpyruvate: step 4/7. Involved in the biosynthesis of the chorismate, which leads to the biosynthesis of aromatic amino acids. Catalyzes the reversible NADPH linked reduction of 3-dehydroshikimate (DHSA) to yield shikimate (SA). This Bacillus anthracis (strain CDC 684 / NRRL 3495) protein is Shikimate dehydrogenase (NADP(+)).